The sequence spans 396 residues: Phosphoglycerate kinase (396 aa).

Residues 20-22 (DIN), arginine 35, 58-61 (HQGR), arginine 115, and arginine 155 contribute to the substrate site. ATP contacts are provided by residues glutamate 328 and 353–356 (GGDT).

It belongs to the phosphoglycerate kinase family. In terms of assembly, monomer.

It localises to the cytoplasm. It carries out the reaction (2R)-3-phosphoglycerate + ATP = (2R)-3-phospho-glyceroyl phosphate + ADP. Its pathway is carbohydrate degradation; glycolysis; pyruvate from D-glyceraldehyde 3-phosphate: step 2/5. This Natronomonas pharaonis (strain ATCC 35678 / DSM 2160 / CIP 103997 / JCM 8858 / NBRC 14720 / NCIMB 2260 / Gabara) (Halobacterium pharaonis) protein is Phosphoglycerate kinase.